We begin with the raw amino-acid sequence, 528 residues long: Inorganic phosphate transporter 1-2 (528 aa).

Topologically, residues 1–24 are cytoplasmic; sequence MAGSQLNVLVKLDQAKTQWYHFMA. A helical membrane pass occupies residues 25–45; the sequence is IVIAGMGFFTDAYDLFCIALV. At 46-71 the chain is on the extracellular side; that stretch reads TKLLGRLYYTDITKPNPGTLPPNVSS. The chain crosses the membrane as a helical span at residues 72 to 92; the sequence is AVTGVALCGTLAGQLFFGWLG. Residues 93–99 are Cytoplasmic-facing; sequence DKLGRKS. A helical transmembrane segment spans residues 100-120; it reads VYGFTLILMVVCSIASGLSFG. Residues 121-125 lie on the Extracellular side of the membrane; the sequence is HTPKS. The helical transmembrane segment at 126 to 146 threads the bilayer; it reads VIATLCFFRFWLGFGIGGDYP. Topologically, residues 147–163 are cytoplasmic; it reads LSATIMSEYASKKTRGA. The chain crosses the membrane as a helical span at residues 164–184; the sequence is FIAAVFAMQGFGILFGAIVAL. The Extracellular segment spans residues 185 to 212; that stretch reads VVSAGFRHAYPAPSYAQNPAASLAPQAD. The helical transmembrane segment at 213 to 232 threads the bilayer; sequence YTWRLILMFGTIPAGLTYYW. At 233–296 the chain is on the cytoplasmic side; sequence RMKMPETARY…RQFMKRHGMH (64 aa). Residues 297–317 traverse the membrane as a helical segment; it reads LLATTSTWFLLDIAFYSQNLF. Over 318–348 the chain is Extracellular; that stretch reads QKDIFSKVGWIPPAKTMNALEELYRISRAQA. The chain crosses the membrane as a helical span at residues 349–369; that stretch reads LIALCGTIPGYWFTVAFIDIV. Over 370–371 the chain is Cytoplasmic; sequence GR. A helical membrane pass occupies residues 372–392; that stretch reads FWIQIMGFFMMTVFMLALGVP. Residues 393-405 are Extracellular-facing; that stretch reads YDHWTHPAHHTGF. The chain crosses the membrane as a helical span at residues 406–426; sequence VVLYALTFFFANFGPNSTTFI. At 427-442 the chain is on the cytoplasmic side; it reads VPAEIFPARLRSTCHG. Residues 443–463 traverse the membrane as a helical segment; it reads ISAASGKAGAIIGAFGFLYAA. Over 464-481 the chain is Extracellular; it reads QDQHNPDAGYSRGIGIRN. Residues 482–502 form a helical membrane-spanning segment; the sequence is ALFVLAGTNFLGMLMTLLVPE. Residues 503 to 528 lie on the Cytoplasmic side of the membrane; the sequence is SKGLSLEEMSKDNVVDETAQEAIAQA.

Belongs to the major facilitator superfamily. Phosphate:H(+) symporter (TC 2.A.1.9) family. As to expression, expressed in the root stele and leaf phloem and xylem.

The protein localises to the membrane. Low-affinity transporter for inorganic phosphate (Pi). Involved in internal Pi transport from root to shoot. Responsible for most of the PHR2-mediated accumulation of excess shoot Pi under abundant Pi conditions, but not for PHO2-mediated accumulation of excess shoot Pi. Acts as a H(+):phosphate symporter. This Oryza sativa subsp. japonica (Rice) protein is Inorganic phosphate transporter 1-2 (PTH1-2).